Consider the following 514-residue polypeptide: MEAHLDQEMILVLDFGGQYNQLITRRIRDLGVYSELHSHKITAAEVKDIAPAGIIFSGGPRSVYAEDAYRCDPEIFDLGIPIFGICYGMQLMSQHFGGTVERAGHREYGKATLTLNDPSPMYANLPLEQTVWMSHSDLVTSVPNGFVVDGTNVSCPIASIKNEELKMYGVQYHPEVNHTMFGKELLKNFLFEVCQCTGDWSMENFIEIEIAKIKEEVGDKKVLCALSGGVDSSVVAALIHAAIGDQLTCMFVDHGLLRKGEAESVMKTFADHFHMNVIKIDAQDRFLNKLKGISDPEQKRKIIGNEFVYVFDEEASKLTDMDFLAQGTLYTDIIESGTDTAQTIKSHHNVGGLPEDMQFKLIEPINTLFKDEVRELGKELGLSDEIVWRQPFPGPGLGIRVLGEITDEKLEIVRESDFILRDEIKKAGLEREIWQYFTVLPPLRSVGVMGDERTYDYAVGIRAVTSIDGMTSDWARIPWDVLEKISVRIVNEVQNVNRVLYDVTSKPPSTIEWE.

Residues 9–199 (MILVLDFGGQ…LFEVCQCTGD (191 aa)) form the Glutamine amidotransferase type-1 domain. The active-site Nucleophile is Cys-86. Residues His-173 and Glu-175 contribute to the active site. The 190-residue stretch at 200–389 (WSMENFIEIE…LGLSDEIVWR (190 aa)) folds into the GMPS ATP-PPase domain. 227 to 233 (SGGVDSS) lines the ATP pocket.

As to quaternary structure, homodimer.

The catalysed reaction is XMP + L-glutamine + ATP + H2O = GMP + L-glutamate + AMP + diphosphate + 2 H(+). The protein operates within purine metabolism; GMP biosynthesis; GMP from XMP (L-Gln route): step 1/1. Functionally, catalyzes the synthesis of GMP from XMP. This Exiguobacterium sibiricum (strain DSM 17290 / CCUG 55495 / CIP 109462 / JCM 13490 / 255-15) protein is GMP synthase [glutamine-hydrolyzing].